The sequence spans 438 residues: Enolase 1 (438 aa).

2 residues coordinate substrate: H160 and E169. The active-site Proton donor is E212. D247, E296, and D321 together coordinate Mg(2+). Positions 296 and 321 each coordinate substrate. The active-site Proton acceptor is the K346. Residues 373-376 and K397 contribute to the substrate site; that span reads SHRS.

The protein belongs to the enolase family. As to quaternary structure, homodimer. Mg(2+) is required as a cofactor.

The protein resides in the cytoplasm. The catalysed reaction is (2R)-2-phosphoglycerate = phosphoenolpyruvate + H2O. Its pathway is carbohydrate degradation; glycolysis; pyruvate from D-glyceraldehyde 3-phosphate: step 4/5. This Candida glabrata (strain ATCC 2001 / BCRC 20586 / JCM 3761 / NBRC 0622 / NRRL Y-65 / CBS 138) (Yeast) protein is Enolase 1 (ENO1).